A 145-amino-acid polypeptide reads, in one-letter code: D-aminoacyl-tRNA deacylase (145 aa).

The Gly-cisPro motif, important for rejection of L-amino acids motif lies at 137 to 138; that stretch reads GP.

It belongs to the DTD family. In terms of assembly, homodimer.

It is found in the cytoplasm. The catalysed reaction is glycyl-tRNA(Ala) + H2O = tRNA(Ala) + glycine + H(+). The enzyme catalyses a D-aminoacyl-tRNA + H2O = a tRNA + a D-alpha-amino acid + H(+). Functionally, an aminoacyl-tRNA editing enzyme that deacylates mischarged D-aminoacyl-tRNAs. Also deacylates mischarged glycyl-tRNA(Ala), protecting cells against glycine mischarging by AlaRS. Acts via tRNA-based rather than protein-based catalysis; rejects L-amino acids rather than detecting D-amino acids in the active site. By recycling D-aminoacyl-tRNA to D-amino acids and free tRNA molecules, this enzyme counteracts the toxicity associated with the formation of D-aminoacyl-tRNA entities in vivo and helps enforce protein L-homochirality. The sequence is that of D-aminoacyl-tRNA deacylase from Cereibacter sphaeroides (strain ATCC 17029 / ATH 2.4.9) (Rhodobacter sphaeroides).